The following is a 618-amino-acid chain: Dihydroxy-acid dehydratase (618 aa).

Residue Asp-81 coordinates Mg(2+). Position 122 (Cys-122) interacts with [2Fe-2S] cluster. Mg(2+) contacts are provided by Asp-123 and Lys-124. Lys-124 carries the post-translational modification N6-carboxylysine. Cys-195 is a binding site for [2Fe-2S] cluster. Position 493 (Glu-493) interacts with Mg(2+). Ser-519 serves as the catalytic Proton acceptor.

This sequence belongs to the IlvD/Edd family. In terms of assembly, homodimer. Requires [2Fe-2S] cluster as cofactor. Mg(2+) is required as a cofactor.

The catalysed reaction is (2R)-2,3-dihydroxy-3-methylbutanoate = 3-methyl-2-oxobutanoate + H2O. It catalyses the reaction (2R,3R)-2,3-dihydroxy-3-methylpentanoate = (S)-3-methyl-2-oxopentanoate + H2O. Its pathway is amino-acid biosynthesis; L-isoleucine biosynthesis; L-isoleucine from 2-oxobutanoate: step 3/4. It participates in amino-acid biosynthesis; L-valine biosynthesis; L-valine from pyruvate: step 3/4. In terms of biological role, functions in the biosynthesis of branched-chain amino acids. Catalyzes the dehydration of (2R,3R)-2,3-dihydroxy-3-methylpentanoate (2,3-dihydroxy-3-methylvalerate) into 2-oxo-3-methylpentanoate (2-oxo-3-methylvalerate) and of (2R)-2,3-dihydroxy-3-methylbutanoate (2,3-dihydroxyisovalerate) into 2-oxo-3-methylbutanoate (2-oxoisovalerate), the penultimate precursor to L-isoleucine and L-valine, respectively. This Shewanella amazonensis (strain ATCC BAA-1098 / SB2B) protein is Dihydroxy-acid dehydratase.